Reading from the N-terminus, the 250-residue chain is Phosphonates import ATP-binding protein PhnC (250 aa).

The 246-residue stretch at 2-247 folds into the ABC transporter domain; it reads ILFNNVNKVW…KLDAQAMKKI (246 aa). 35 to 42 contributes to the ATP binding site; that stretch reads GLSGAGKT.

This sequence belongs to the ABC transporter superfamily. Phosphonates importer (TC 3.A.1.9.1) family. In terms of assembly, the complex is composed of two ATP-binding proteins (PhnC), two transmembrane proteins (PhnE) and a solute-binding protein (PhnD).

It localises to the cell membrane. The catalysed reaction is phosphonate(out) + ATP + H2O = phosphonate(in) + ADP + phosphate + H(+). Its function is as follows. Part of the ABC transporter complex PhnCDE involved in phosphonates import. Responsible for energy coupling to the transport system. This Mycoplasma capricolum subsp. capricolum (strain California kid / ATCC 27343 / NCTC 10154) protein is Phosphonates import ATP-binding protein PhnC.